The chain runs to 432 residues: Adenylosuccinate synthetase (432 aa).

Residues 13 to 19 and 41 to 43 each bind GTP; these read GDEGKGK and GHT. The Proton acceptor role is filled by Asp14. Positions 14 and 41 each coordinate Mg(2+). Residues 14 to 17, 39 to 42, Thr130, Arg144, Gln225, Thr240, and Arg304 contribute to the IMP site; these read DEGK and NAGH. His42 acts as the Proton donor in catalysis. 300–306 provides a ligand contact to substrate; sequence AVTGRPR. GTP-binding positions include Arg306, 332 to 334, and 415 to 417; these read KLD and STG.

It belongs to the adenylosuccinate synthetase family. As to quaternary structure, homodimer. It depends on Mg(2+) as a cofactor.

The protein resides in the cytoplasm. The enzyme catalyses IMP + L-aspartate + GTP = N(6)-(1,2-dicarboxyethyl)-AMP + GDP + phosphate + 2 H(+). The protein operates within purine metabolism; AMP biosynthesis via de novo pathway; AMP from IMP: step 1/2. Its function is as follows. Plays an important role in the de novo pathway of purine nucleotide biosynthesis. Catalyzes the first committed step in the biosynthesis of AMP from IMP. The chain is Adenylosuccinate synthetase from Pasteurella multocida (strain Pm70).